Here is a 165-residue protein sequence, read N- to C-terminus: Transcription antitermination protein NusB (165 aa).

Residues 1–27 are disordered; sequence MISDDTDQFNPRDAKSPEIAKGKSAKR. The segment covering 10 to 21 has biased composition (basic and acidic residues); that stretch reads NPRDAKSPEIAK.

It belongs to the NusB family.

In terms of biological role, involved in transcription antitermination. Required for transcription of ribosomal RNA (rRNA) genes. Binds specifically to the boxA antiterminator sequence of the ribosomal RNA (rrn) operons. This chain is Transcription antitermination protein NusB, found in Pseudomonas syringae pv. tomato (strain ATCC BAA-871 / DC3000).